Here is a 222-residue protein sequence, read N- to C-terminus: MKKHLLLLALLLSGISPAQALDVGDISSFMNSDSSTLSKTIKNSTDSGRLINIRLERLSSPLDDGQVISMDKPDELLLTPASLLLPAQASEVIRFFYKGPADEKERYYRIVWFDQALSDAQRDNANRSAVATASARIGTILVVAPRQANYHFQYANGTLTNTGNATLRILAYGPCLKAANGKECKENYYLMPGKSRRFTRVDTADNKGRVALWQGDKFIPVK.

An N-terminal signal peptide occupies residues 1-20 (MKKHLLLLALLLSGISPAQA).

Belongs to the EcpB/EcpE family.

Its function is as follows. Part of the ecpRABCDE operon, which encodes the E.coli common pilus (ECP). ECP is found in both commensal and pathogenic strains and plays a dual role in early-stage biofilm development and host cell recognition. This chain is Probable fimbrial chaperone EcpB (ecpB), found in Escherichia coli O157:H7.